Reading from the N-terminus, the 192-residue chain is dTDP-3-amino-3,6-dideoxy-alpha-D-galactopyranose 3-N-acetyltransferase (192 aa).

This sequence belongs to the transferase hexapeptide repeat family.

The catalysed reaction is dTDP-3-amino-3,6-dideoxy-alpha-D-galactopyranose + acetyl-CoA = dTDP-3-acetamido-3,6-dideoxy-alpha-D-galactopyranose + CoA + H(+). Catalyzes the transfer of an acetyl group to dTDP-D-Fucp3N to form dTDP-D-Fucp3NAc in the biosynthesis of dTDP-3-acetamido-3,6-dideoxy-alpha-D-galactose, a glycan chain of the S-layer. This is dTDP-3-amino-3,6-dideoxy-alpha-D-galactopyranose 3-N-acetyltransferase (fdtC) from Aneurinibacillus thermoaerophilus.